The primary structure comprises 216 residues: Ribonuclease HII (216 aa).

Positions 28-216 constitute an RNase H type-2 domain; that stretch reads ACIAGIDEAG…GVKEYVRSEE (189 aa). Aspartate 34, glutamate 35, and aspartate 126 together coordinate a divalent metal cation.

The protein belongs to the RNase HII family. Requires Mn(2+) as cofactor. It depends on Mg(2+) as a cofactor.

It localises to the cytoplasm. The catalysed reaction is Endonucleolytic cleavage to 5'-phosphomonoester.. In terms of biological role, endonuclease that specifically degrades the RNA of RNA-DNA hybrids. In Geotalea uraniireducens (strain Rf4) (Geobacter uraniireducens), this protein is Ribonuclease HII.